Consider the following 411-residue polypeptide: Cytochrome P450 monooxygenase sirE (411 aa).

N-linked (GlcNAc...) asparagine glycans are attached at residues N12 and N149. The helical transmembrane segment at 181–203 (FLNVISIFTVMMASLNVLYDILA) threads the bilayer. N-linked (GlcNAc...) asparagine glycosylation occurs at N342. C352 serves as a coordination point for heme.

Belongs to the cytochrome P450 family. Requires heme as cofactor.

Its subcellular location is the membrane. It functions in the pathway mycotoxin biosynthesis. Functionally, cytochrome P450 monooxygenase; part of the gene cluster that mediates the biosynthesis of sirodesmin PL, an epipolythiodioxopiperazine (ETP) characterized by a disulfide bridged cyclic dipeptide and that acts as a phytotoxin which is involved in the blackleg didease of canola. SirD catalyzes the O-prenylation of L-tyrosine (L-Tyr) in the presence of dimethylallyl diphosphate (DMAPP) to yield 4-O-dimethylallyl-L-Tyr, and therefore represents probably the first pathway-specific enzyme in the biosynthesis of sirodesmin PL. 4-O-dimethylallyl-L-Tyr, then undergoes condensation with L-Ser in a reaction catalyzed by the non-ribosomal peptide synthase sirP to form the diketopiperazine (DKP) backbone. Further bishydroxylation of the DKP performed by the cytochrome P450 monooxygenase sirC leads to the production of the intermediate phomamide. This step is essential to form the reactive thiol group required for toxicity of sirodesmin PL. The next steps of sirodesmin biosynthesis are not well understood yet, but some predictions could be made from intermediate compounds identification. Phomamide is converted into phomalizarine via oxidation, probably by sirT. Further oxidation, methylation (by sirM or sirN) and reduction steps convert phomalizarine to deacetyl sirodesmin. Finally, acetyltransferase sirH probably acetylates deacetyl sirodesmin to produce sirodesmin PL. In Leptosphaeria maculans (Blackleg fungus), this protein is Cytochrome P450 monooxygenase sirE.